A 400-amino-acid polypeptide reads, in one-letter code: Bifunctional arginine demethylase and lysyl-hydroxylase psr-1 (400 aa).

The region spanning 146–310 (RKTKKLSEDY…LVWPKTVKGR (165 aa)) is the JmjC domain. Residue Thr189 coordinates substrate. Fe cation contacts are provided by His192 and Asp194. Asn202 is a binding site for 2-oxoglutarate. Lys209 is a substrate binding site. His278 contacts Fe cation. Thr290 lines the 2-oxoglutarate pocket. The segment at 342 to 400 (DMNESSSDSSSSSSSSDDSSDESDCDDSGRCGGRKRKNDDRSNECPEKMSTTYFQNSLV) is disordered. Over residues 346-358 (SSSDSSSSSSSSD) the composition is skewed to low complexity. Basic and acidic residues predominate over residues 378-388 (KNDDRSNECPE). A compositionally biased stretch (polar residues) spans 390 to 400 (MSTTYFQNSLV).

The protein belongs to the JMJD6 family. In terms of assembly, interacts with ced-5 and ced-12. It depends on Fe(2+) as a cofactor.

Its subcellular location is the nucleus. In terms of biological role, dioxygenase that can both act as a histone arginine demethylase and a lysyl-hydroxylase. This chain is Bifunctional arginine demethylase and lysyl-hydroxylase psr-1 (psr-1), found in Caenorhabditis elegans.